A 297-amino-acid polypeptide reads, in one-letter code: uncharacterized protein (297 aa).

The 99-residue stretch at 187-285 folds into the HTH araC/xylS-type domain; the sequence is EKLIATLHAS…GYAPSAVLKN (99 aa). DNA-binding regions (H-T-H motif) lie at residues 204 to 225 and 252 to 275; these read ADMAATIPCSEAWLRRLFLRYT and VGEVADTLNFFDSFHFSKAFKHKF.

This is an uncharacterized protein from Escherichia coli (strain K12).